A 34-amino-acid chain; its full sequence is Photosystem II reaction center protein Psb30 (34 aa).

Residues 7-27 (VAQLISLFLILTSGPAIIVLI) traverse the membrane as a helical segment.

Belongs to the Psb30/Ycf12 family. In terms of assembly, PSII is composed of 1 copy each of membrane proteins PsbA, PsbB, PsbC, PsbD, PsbE, PsbF, PsbH, PsbI, PsbJ, PsbK, PsbL, PsbM, PsbT, PsbX, PsbY, PsbZ, Psb30/Ycf12, peripheral proteins of the oxygen-evolving complex and a large number of cofactors. It forms dimeric complexes.

It is found in the plastid. The protein resides in the chloroplast thylakoid membrane. A core subunit of photosystem II (PSII), probably helps stabilize the reaction center. The polypeptide is Photosystem II reaction center protein Psb30 (Rhodomonas salina (Cryptomonas salina)).